Reading from the N-terminus, the 663-residue chain is Preterminal protein (663 aa).

The Nuclear localization signal signature appears at 367 to 376; the sequence is SLPLPTRRRR. Residues 374-414 form a disordered region; the sequence is RRRVARPAPPSPSPSPEPVELEMPPLEGEEEEEEEELPPRS. Residues 380-390 show a composition bias toward pro residues; sequence PAPPSPSPSPE. The span at 400-409 shows a compositional bias: acidic residues; sequence EGEEEEEEEE. Serine 575 carries the post-translational modification O-(5'-phospho-DNA)-serine. A disordered region spans residues 632–663; that stretch reads QLQPMPELNDPVQLPPLRPERQRPPLGPRRPL.

This sequence belongs to the adenoviridae terminal protein family. In terms of assembly, heterodimer with the polymerase; this heterodimer binds to bp 9 to 18 of the genome. Interacts with host POU2F1; POU2F1 binds to the auxiliary sequences in the inverted terminal repeats and tethers the pTP-POL heterodimer to the origin DNA thereby participating in the assembly of the pre-initiation complex (POL-TP-DBP-NFIA-POU2F1). Preterminal protein is used to replicate viral genome, upon genomic encapsidation it is processed first into iTP and finally into TP by adenovirus protease.

It is found in the host nucleus matrix. Its function is as follows. Protein covalently bound to the viral DNA that acts as a primer for viral genomic replication by DNA strand displacement. Assembles on the viral origin of replication in an initiation complex with viral polymerase, DBP, host NFIA and host POU2F1/OCT1. During initiation, the polymerase covalently couples the first dCTP with Ser-580 of pTP. The terminal protein stimulates the template activity over 20 fold compared to protein-free templates. Neo-synthesized viral genomes are linked to two preterminal proteins, one for each 5' end. These new genomes are encapsidated in the nucleus, and during capsid maturation by viral protease, preterminal protein is first cleaved into intermediary (iTP), then into mature TP. May play a role in host nuclear matrix localization of genomic DNA. The polypeptide is Preterminal protein (Bos taurus (Bovine)).